The primary structure comprises 427 residues: UPF0229 protein YeaH (427 aa).

Residues 79 to 90 show a composition bias toward basic and acidic residues; the sequence is NDHFVQNDRIER. The segment at 79–110 is disordered; it reads NDHFVQNDRIERPQGGGGGSGSGQGQASQDGE. Residues 92 to 102 are compositionally biased toward gly residues; sequence QGGGGGSGSGQ.

Belongs to the UPF0229 family.

The polypeptide is UPF0229 protein YeaH (Shigella boydii serotype 18 (strain CDC 3083-94 / BS512)).